The chain runs to 81 residues: Cortexin-2 (81 aa).

Residues 29-49 (TGFAFVGILCIFLGLLIIRCF) traverse the membrane as a helical segment.

Belongs to the cortexin family.

It is found in the membrane. The polypeptide is Cortexin-2 (CTXN2) (Homo sapiens (Human)).